The following is a 484-amino-acid chain: Glutamyl-tRNA(Gln) amidotransferase subunit A (484 aa).

Catalysis depends on charge relay system residues Lys-77 and Ser-152. Catalysis depends on Ser-176, which acts as the Acyl-ester intermediate.

Belongs to the amidase family. GatA subfamily. As to quaternary structure, heterotrimer of A, B and C subunits.

The enzyme catalyses L-glutamyl-tRNA(Gln) + L-glutamine + ATP + H2O = L-glutaminyl-tRNA(Gln) + L-glutamate + ADP + phosphate + H(+). In terms of biological role, allows the formation of correctly charged Gln-tRNA(Gln) through the transamidation of misacylated Glu-tRNA(Gln) in organisms which lack glutaminyl-tRNA synthetase. The reaction takes place in the presence of glutamine and ATP through an activated gamma-phospho-Glu-tRNA(Gln). In Lacticaseibacillus paracasei (strain ATCC 334 / BCRC 17002 / CCUG 31169 / CIP 107868 / KCTC 3260 / NRRL B-441) (Lactobacillus paracasei), this protein is Glutamyl-tRNA(Gln) amidotransferase subunit A.